The sequence spans 157 residues: Endoribonuclease YbeY (157 aa).

Positions 118, 122, and 128 each coordinate Zn(2+).

Belongs to the endoribonuclease YbeY family. Zn(2+) serves as cofactor.

It localises to the cytoplasm. Functionally, single strand-specific metallo-endoribonuclease involved in late-stage 70S ribosome quality control and in maturation of the 3' terminus of the 16S rRNA. The chain is Endoribonuclease YbeY from Bordetella parapertussis (strain 12822 / ATCC BAA-587 / NCTC 13253).